The primary structure comprises 361 residues: Phospho-N-acetylmuramoyl-pentapeptide-transferase (361 aa).

The next 10 membrane-spanning stretches (helical) occupy residues 27–47, 72–92, 94–114, 133–153, 169–189, 200–220, 240–260, 264–284, 289–309, and 338–358; these read GAMV…IDHL, TPTM…LLWA, LHNP…FVGF, LRLA…IWAG, FAIN…VGAG, GLAI…AYLV, LAVL…FNAP, IFMG…IAVA, IVLA…IVQV, and QIVI…LSTL.

It belongs to the glycosyltransferase 4 family. MraY subfamily. Mg(2+) serves as cofactor.

It localises to the cell inner membrane. The catalysed reaction is UDP-N-acetyl-alpha-D-muramoyl-L-alanyl-gamma-D-glutamyl-meso-2,6-diaminopimeloyl-D-alanyl-D-alanine + di-trans,octa-cis-undecaprenyl phosphate = di-trans,octa-cis-undecaprenyl diphospho-N-acetyl-alpha-D-muramoyl-L-alanyl-D-glutamyl-meso-2,6-diaminopimeloyl-D-alanyl-D-alanine + UMP. It functions in the pathway cell wall biogenesis; peptidoglycan biosynthesis. Its function is as follows. Catalyzes the initial step of the lipid cycle reactions in the biosynthesis of the cell wall peptidoglycan: transfers peptidoglycan precursor phospho-MurNAc-pentapeptide from UDP-MurNAc-pentapeptide onto the lipid carrier undecaprenyl phosphate, yielding undecaprenyl-pyrophosphoryl-MurNAc-pentapeptide, known as lipid I. In Afipia carboxidovorans (strain ATCC 49405 / DSM 1227 / KCTC 32145 / OM5) (Oligotropha carboxidovorans), this protein is Phospho-N-acetylmuramoyl-pentapeptide-transferase.